The sequence spans 1230 residues: ABC transporter B family member 5 (1230 aa).

Helical transmembrane passes span 27–47 (VLLM…SPLM), 78–98 (LVYL…CWMI), 154–174 (FIQL…RGWL), 177–197 (LVML…AIIV), 253–273 (GFVT…TYAL), and 286–306 (GYTG…SIAL). The ABC transmembrane type-1 1 domain occupies 30-318 (MIVGSIGAIA…ASPCLTAFTA (289 aa)). The ABC transporter 1 domain occupies 353 to 589 (IELRDVCFSY…HEGAYSQLLR (237 aa)). 388-395 (GESGSGKS) provides a ligand contact to ATP. N-linked (GlcNAc...) asparagine glycosylation is found at asparagine 540, asparagine 615, and asparagine 616. Residues 602–621 (ISDGSISSGSSRGNNSTRQD) form a disordered region. Over residues 603-617 (SDGSISSGSSRGNNS) the composition is skewed to low complexity. The next 2 membrane-spanning stretches (helical) occupy residues 662 to 682 (ILIL…IFGI) and 707 to 727 (MIFV…NYLF). Residues 663 to 950 (LILGTLVGAV…ASSFAPDSSK (288 aa)) form the ABC transmembrane type-1 2 domain. The N-linked (GlcNAc...) asparagine glycan is linked to asparagine 759. 3 helical membrane-spanning segments follow: residues 798–818 (IIAF…IPFI), 889–909 (GVGF…CFYV), and 924–944 (VFQV…ASSF). The 239-residue stretch at 985–1223 (IELCHISFTY…EGGVYASLVQ (239 aa)) folds into the ABC transporter 2 domain. Residue 1020–1027 (GESGSGKS) coordinates ATP. N-linked (GlcNAc...) asparagine glycans are attached at residues asparagine 1074, asparagine 1174, and asparagine 1227.

Belongs to the ABC transporter superfamily. ABCB family. Multidrug resistance exporter (TC 3.A.1.201) subfamily.

The protein localises to the membrane. In Arabidopsis thaliana (Mouse-ear cress), this protein is ABC transporter B family member 5 (ABCB5).